The following is a 364-amino-acid chain: Fructose-bisphosphate aldolase B (364 aa).

Ala2 carries the post-translational modification N-acetylalanine. Position 13 is an N6-succinyllysine (Lys13). Ser36 is subject to Phosphoserine. Thr39 is modified (phosphothreonine). Residue Arg43 participates in beta-D-fructose 1,6-bisphosphate binding. Thr119 carries the phosphothreonine modification. Lys121 is subject to N6-succinyllysine. Ser132 carries the phosphoserine modification. The active-site Proton acceptor is the Glu188. Lys230 serves as the catalytic Schiff-base intermediate with dihydroxyacetone-P. Residues Ser272, Ser276, Ser299, and Ser301 each carry the phosphoserine modification. Residue 272-274 participates in beta-D-fructose 1,6-bisphosphate binding; the sequence is SGG. Arg304 lines the beta-D-fructose 1,6-bisphosphate pocket. Position 309 is a phosphoserine (Ser309). Lys317 is modified (N6-succinyllysine).

Belongs to the class I fructose-bisphosphate aldolase family. In terms of assembly, homotetramer. Interacts with BBS1, BBS2, BBS4 and BBS7. Forms a ternary complex with G6PD and TP53; this interaction is direct.

It localises to the cytoplasm. The protein resides in the cytosol. Its subcellular location is the cytoskeleton. It is found in the microtubule organizing center. The protein localises to the centrosome. It localises to the centriolar satellite. The catalysed reaction is beta-D-fructose 1,6-bisphosphate = D-glyceraldehyde 3-phosphate + dihydroxyacetone phosphate. It carries out the reaction beta-D-fructose 1-phosphate = D-glyceraldehyde + dihydroxyacetone phosphate. The protein operates within carbohydrate degradation; glycolysis; D-glyceraldehyde 3-phosphate and glycerone phosphate from D-glucose: step 4/4. Its pathway is carbohydrate biosynthesis; gluconeogenesis. It functions in the pathway carbohydrate metabolism; fructose metabolism. In terms of biological role, catalyzes the aldol cleavage of fructose 1,6-biphosphate to form two triosephosphates dihydroxyacetone phosphate and D-glyceraldehyde 3-phosphate in glycolysis as well as the reverse stereospecific aldol addition reaction in gluconeogenesis. In fructolysis, metabolizes fructose 1-phosphate derived from the phosphorylation of dietary fructose by fructokinase into dihydroxyacetone phosphate and D-glyceraldehyde. Acts as an adapter independently of its enzymatic activity, exerts a tumor suppressor role by stabilizing the ternary complex with G6PD and TP53 to inhibit G6PD activity and keep oxidative pentose phosphate metabolism in check. The protein is Fructose-bisphosphate aldolase B (ALDOB) of Ovis aries (Sheep).